Consider the following 258-residue polypeptide: Probable succinate transporter subunit YjjP (258 aa).

The next 5 helical transmembrane spans lie at 116 to 137 (YPRWLLVLMVGLSCACFCKLNN), 143 to 160 (AVVTFFASTVAMYIRQLL), 171 to 191 (FCITAFVATTISGLMLRLPAF), 197 to 217 (IAMAASVLLLVPGFPLINAVA), and 231 to 251 (WAIASLLTLATCIGVVMAMTM).

The protein belongs to the ThrE exporter (TC 2.A.79) family. As to quaternary structure, the transporter is composed of YjjB and YjjP.

The protein localises to the cell inner membrane. In terms of biological role, involved in succinate export with YjjB. Both proteins are required for export. Participates in succinate export, but also in the export of other dicarboxylates, such as fumarate and malate. Contributes to succinate production under both aerobic and anaerobic conditions, and increases fumarate and malate production during anaerobic succinate production. The polypeptide is Probable succinate transporter subunit YjjP (Klebsiella aerogenes (strain ATCC 13048 / DSM 30053 / CCUG 1429 / JCM 1235 / KCTC 2190 / NBRC 13534 / NCIMB 10102 / NCTC 10006 / CDC 819-56) (Enterobacter aerogenes)).